Reading from the N-terminus, the 366-residue chain is tRNA pseudouridine synthase B (366 aa).

The segment at 1–55 is disordered; it reads MTVTTPDALLAPHDVQHAGADESAAQIRKPRDNNDPRNANRGGGNGKPRRDKRDV. The active-site Nucleophile is the aspartate 92.

The protein belongs to the pseudouridine synthase TruB family. Type 1 subfamily.

It catalyses the reaction uridine(55) in tRNA = pseudouridine(55) in tRNA. In terms of biological role, responsible for synthesis of pseudouridine from uracil-55 in the psi GC loop of transfer RNAs. This chain is tRNA pseudouridine synthase B, found in Rhodopseudomonas palustris (strain ATCC BAA-98 / CGA009).